The chain runs to 101 residues: Enhancer of yellow 2 transcription factor (101 aa).

This sequence belongs to the ENY2 family. As to quaternary structure, component of the nuclear pore complex (NPC)-associated AMEX complex (anchoring and mRNA export complex), composed of at least e(y)2 and xmas-2. Component of the SAGA transcription coactivator-HAT complexes, at least composed of Ada2b, e(y)2, Pcaf/Gcn5, Taf10 and Nipped-A/Trrap. Within the SAGA complex, e(y)2, Sgf11, and not/nonstop form an additional subcomplex of SAGA called the DUB module (deubiquitination module). Component of the THO complex, composed of at least e(y)2, HPR1, THO2, THOC5, THOC6 and THOC7. Interacts with e(y)1. Interacts with su(Hw) (via zinc fingers). Interacts with xmas-2; required for localization to the nuclear periphery. Interacts with the nuclear pore complex (NPC).

The protein localises to the nucleus. It localises to the nucleoplasm. It is found in the cytoplasm. Functionally, involved in mRNA export coupled transcription activation by association with both the AMEX and the SAGA complexes. The SAGA complex is a multiprotein complex that activates transcription by remodeling chromatin and mediating histone acetylation and deubiquitination. Within the SAGA complex, participates in a subcomplex that specifically deubiquitinates histone H2B. The SAGA complex is recruited to specific gene promoters by activators, where it is required for transcription. Required for nuclear receptor-mediated transactivation. Involved in transcription elongation by recruiting the THO complex onto nascent mRNA. The AMEX complex functions in docking export-competent ribonucleoprotein particles (mRNPs) to the nuclear entrance of the nuclear pore complex (nuclear basket). AMEX participates in mRNA export and accurate chromatin positioning in the nucleus by tethering genes to the nuclear periphery. The protein is Enhancer of yellow 2 transcription factor of Drosophila yakuba (Fruit fly).